Here is a 236-residue protein sequence, read N- to C-terminus: EP300-interacting inhibitor of differentiation 2 (236 aa).

Polar residues predominate over residues 1-15 (MSQLPAVSSAPQTGA). The interval 1 to 102 (MSQLPAVSSA…REGPAAAAAS (102 aa)) is disordered. 2 stretches are compositionally biased toward low complexity: residues 32–68 (RALP…GRVA) and 75–102 (AAAA…AAAS). Omega-N-methylarginine is present on residues R63 and R79. The stretch at 170-190 (RIQELEERRRRFVEACRAREA) forms a coiled coil.

Heterodimer with EID2B. Interacts with the C-terminus of EP300. Interacts with HDAC1 and HDAC2. Interacts with SMAD2, SMAD4 and with the MH2 domain of SMAD3. Expressed in heart, brain, kidney and pancreas. Not detected in placenta.

It localises to the nucleus. In terms of biological role, interacts with EP300 and acts as a repressor of MYOD-dependent transcription and muscle differentiation. Inhibits EP300 histone acetyltransferase activity. Acts as a repressor of TGFB/SMAD transcriptional responses. May act as a repressor of the TGFB/SMAD3-dependent signaling by selectively blocking formation of TGFB-induced SMAD3-SMAD4 complex. The polypeptide is EP300-interacting inhibitor of differentiation 2 (Mus musculus (Mouse)).